The chain runs to 191 residues: Orotate phosphoribosyltransferase (191 aa).

Position 114–122 (Glu-114–Ser-122) interacts with 5-phospho-alpha-D-ribose 1-diphosphate. Orotate-binding residues include Thr-118 and Arg-146.

This sequence belongs to the purine/pyrimidine phosphoribosyltransferase family. PyrE subfamily. Homodimer. Mg(2+) is required as a cofactor.

It catalyses the reaction orotidine 5'-phosphate + diphosphate = orotate + 5-phospho-alpha-D-ribose 1-diphosphate. It participates in pyrimidine metabolism; UMP biosynthesis via de novo pathway; UMP from orotate: step 1/2. Functionally, catalyzes the transfer of a ribosyl phosphate group from 5-phosphoribose 1-diphosphate to orotate, leading to the formation of orotidine monophosphate (OMP). This is Orotate phosphoribosyltransferase from Desulforamulus reducens (strain ATCC BAA-1160 / DSM 100696 / MI-1) (Desulfotomaculum reducens).